Reading from the N-terminus, the 98-residue chain is Large ribosomal subunit protein uL23 (98 aa).

Belongs to the universal ribosomal protein uL23 family. Part of the 50S ribosomal subunit. Contacts protein L29, and trigger factor when it is bound to the ribosome.

In terms of biological role, one of the early assembly proteins it binds 23S rRNA. One of the proteins that surrounds the polypeptide exit tunnel on the outside of the ribosome. Forms the main docking site for trigger factor binding to the ribosome. This chain is Large ribosomal subunit protein uL23, found in Caulobacter sp. (strain K31).